The chain runs to 193 residues: Peptidyl-tRNA hydrolase (193 aa).

Position 16 (tyrosine 16) interacts with tRNA. The active-site Proton acceptor is histidine 21. Phenylalanine 67, asparagine 69, and asparagine 115 together coordinate tRNA.

Belongs to the PTH family. Monomer.

Its subcellular location is the cytoplasm. It carries out the reaction an N-acyl-L-alpha-aminoacyl-tRNA + H2O = an N-acyl-L-amino acid + a tRNA + H(+). Functionally, hydrolyzes ribosome-free peptidyl-tRNAs (with 1 or more amino acids incorporated), which drop off the ribosome during protein synthesis, or as a result of ribosome stalling. Its function is as follows. Catalyzes the release of premature peptidyl moieties from peptidyl-tRNA molecules trapped in stalled 50S ribosomal subunits, and thus maintains levels of free tRNAs and 50S ribosomes. This chain is Peptidyl-tRNA hydrolase, found in Psychrobacter arcticus (strain DSM 17307 / VKM B-2377 / 273-4).